We begin with the raw amino-acid sequence, 500 residues long: Intracellular exo-alpha-(1-&gt;5)-L-arabinofuranosidase (500 aa).

Positions 28, 73, and 173 each coordinate alpha-L-arabinofuranose. E174 functions as the Proton donor/acceptor in the catalytic mechanism. Alpha-L-arabinofuranose-binding residues include Y245, E293, and Q350. The Nucleophile role is filled by E293.

The protein belongs to the glycosyl hydrolase 51 family. As to quaternary structure, homohexamer; trimer of dimers.

The protein resides in the cytoplasm. It carries out the reaction Hydrolysis of terminal non-reducing alpha-L-arabinofuranoside residues in alpha-L-arabinosides.. It participates in glycan metabolism; L-arabinan degradation. In terms of biological role, involved in the degradation of arabinan and is a key enzyme in the complete degradation of the plant cell wall. Catalyzes the cleavage of terminal alpha-(1-&gt;5)-arabinofuranosyl bonds in different hemicellulosic homopolysaccharides (branched and debranched arabinans). The chain is Intracellular exo-alpha-(1-&gt;5)-L-arabinofuranosidase (abfA) from Halalkalibacterium halodurans (strain ATCC BAA-125 / DSM 18197 / FERM 7344 / JCM 9153 / C-125) (Bacillus halodurans).